Reading from the N-terminus, the 493-residue chain is Phenmedipham hydrolase (493 aa).

The active-site Acyl-ester intermediate is the Ser-188. Catalysis depends on charge relay system residues Glu-307 and His-402.

The protein belongs to the type-B carboxylesterase/lipase family. As to quaternary structure, monomer.

In terms of biological role, may degrade the phenylcarbamate herbicides phenmedipham and desmedipham cometabolically by hydrolyzing their central carbamate linkages. Conveys resistance to the herbicide phenmedipham. The chain is Phenmedipham hydrolase (pcd) from Pseudarthrobacter oxydans (Arthrobacter oxydans).